Reading from the N-terminus, the 504-residue chain is Maturase K (504 aa).

It belongs to the intron maturase 2 family. MatK subfamily.

Its subcellular location is the plastid. The protein resides in the chloroplast. Functionally, usually encoded in the trnK tRNA gene intron. Probably assists in splicing its own and other chloroplast group II introns. This chain is Maturase K, found in Barbarea vulgaris (Yellow rocket).